The following is a 107-amino-acid chain: Small ribosomal subunit protein uS17 (107 aa).

The protein belongs to the universal ribosomal protein uS17 family. As to quaternary structure, part of the 30S ribosomal subunit.

Functionally, one of the primary rRNA binding proteins, it binds specifically to the 5'-end of 16S ribosomal RNA. The polypeptide is Small ribosomal subunit protein uS17 (Thermotoga maritima (strain ATCC 43589 / DSM 3109 / JCM 10099 / NBRC 100826 / MSB8)).